The sequence spans 160 residues: MNQIVLNIIIAFLWVLFQDEDHFKFSTFFSGYLIGLIVIYILHRFFSDDFYVRKIWVAIKFLGVYLYQLITSSISTINYILFKTKDMNPGLLSYETRLTSDWSITFLTILIIITPGSTVIRISQDSKKFFIHSIDVSEKEKDSLLRSIKHYEDLILEVSR.

Transmembrane regions (helical) follow at residues 22–42 (HFKF…IYIL), 55–75 (IWVA…SSIS), and 100–120 (SDWS…STVI).

This sequence belongs to the CPA3 antiporters (TC 2.A.63) subunit E family. As to quaternary structure, may form a heterooligomeric complex that consists of seven subunits: mnhA2, mnhB2, mnhC2, mnhD2, mnhE2, mnhF2 and mnhG2.

The protein resides in the cell membrane. This is Putative antiporter subunit mnhE2 (mnhE2) from Staphylococcus aureus (strain USA300).